We begin with the raw amino-acid sequence, 201 residues long: Segregation and condensation protein B (201 aa).

Belongs to the ScpB family. As to quaternary structure, homodimer. Homodimerization may be required to stabilize the binding of ScpA to the Smc head domains. Component of a cohesin-like complex composed of ScpA, ScpB and the Smc homodimer, in which ScpA and ScpB bind to the head domain of Smc. The presence of the three proteins is required for the association of the complex with DNA.

It localises to the cytoplasm. Its function is as follows. Participates in chromosomal partition during cell division. May act via the formation of a condensin-like complex containing Smc and ScpA that pull DNA away from mid-cell into both cell halves. In Enterococcus faecalis (strain ATCC 700802 / V583), this protein is Segregation and condensation protein B.